A 93-amino-acid polypeptide reads, in one-letter code: Small ribosomal subunit protein uS19 (93 aa).

Belongs to the universal ribosomal protein uS19 family.

Protein S19 forms a complex with S13 that binds strongly to the 16S ribosomal RNA. This Wolinella succinogenes (strain ATCC 29543 / DSM 1740 / CCUG 13145 / JCM 31913 / LMG 7466 / NCTC 11488 / FDC 602W) (Vibrio succinogenes) protein is Small ribosomal subunit protein uS19.